Here is a 645-residue protein sequence, read N- to C-terminus: 1,4-alpha-glucan branching enzyme GlgB (645 aa).

Catalysis depends on Asp309, which acts as the Nucleophile. Catalysis depends on Glu352, which acts as the Proton donor. The segment at 619–645 is disordered; sequence VKTRKGSKKQDGSKTKVRSNVTSRGKR. A compositionally biased stretch (polar residues) spans 636-645; that stretch reads RSNVTSRGKR.

The protein belongs to the glycosyl hydrolase 13 family. GlgB subfamily. In terms of assembly, monomer.

The enzyme catalyses Transfers a segment of a (1-&gt;4)-alpha-D-glucan chain to a primary hydroxy group in a similar glucan chain.. It participates in glycan biosynthesis; glycogen biosynthesis. Catalyzes the formation of the alpha-1,6-glucosidic linkages in glycogen by scission of a 1,4-alpha-linked oligosaccharide from growing alpha-1,4-glucan chains and the subsequent attachment of the oligosaccharide to the alpha-1,6 position. In Bacillus cereus (strain G9842), this protein is 1,4-alpha-glucan branching enzyme GlgB.